We begin with the raw amino-acid sequence, 304 residues long: Probable porphobilinogen deaminase (304 aa).

The residue at position 240 (Cys-240) is an S-(dipyrrolylmethanemethyl)cysteine.

It belongs to the HMBS family. Dipyrromethane serves as cofactor.

It carries out the reaction 4 porphobilinogen + H2O = hydroxymethylbilane + 4 NH4(+). It participates in porphyrin-containing compound metabolism; protoporphyrin-IX biosynthesis; coproporphyrinogen-III from 5-aminolevulinate: step 2/4. Its function is as follows. Tetrapolymerization of the monopyrrole PBG into the hydroxymethylbilane pre-uroporphyrinogen in several discrete steps. In Ignicoccus hospitalis (strain KIN4/I / DSM 18386 / JCM 14125), this protein is Probable porphobilinogen deaminase.